The following is a 302-amino-acid chain: MTLPPLSHLDRLEAESIHILREVAAEFRAPVMLYSVGKDSSVLLHLLLKAFAPSRPPIPLLHIDTRWKFREMIAFRDRRAAETGVDLRVHINPDGVAQDVSPISHGAAVHTDIMKTQGLKQALEQGGFDAAIGGARRDEEKSRAKERVFSFRNARHRWDPKNQRPELWNLYNARTKPGESVRVFPLSNWTELDVWLYIYREKIPVVPLYFAAPRPVVARDGAWIMVDDARLPLHPGETPQLRSVRFRTLGCYPLTGAIESSADTLEAVIAEMLVSTSSERQGRMIDHAPGASMEQKKVEGYF.

Belongs to the PAPS reductase family. CysD subfamily. As to quaternary structure, heterodimer composed of CysD, the smaller subunit, and CysN.

It carries out the reaction sulfate + ATP + H(+) = adenosine 5'-phosphosulfate + diphosphate. It participates in sulfur metabolism; hydrogen sulfide biosynthesis; sulfite from sulfate: step 1/3. With CysN forms the ATP sulfurylase (ATPS) that catalyzes the adenylation of sulfate producing adenosine 5'-phosphosulfate (APS) and diphosphate, the first enzymatic step in sulfur assimilation pathway. APS synthesis involves the formation of a high-energy phosphoric-sulfuric acid anhydride bond driven by GTP hydrolysis by CysN coupled to ATP hydrolysis by CysD. This Xanthomonas oryzae pv. oryzae (strain MAFF 311018) protein is Sulfate adenylyltransferase subunit 2.